The following is a 457-amino-acid chain: Bifunctional protein GlmU (457 aa).

Positions 1–230 (MSKRYAVVLA…FEESLGVNDR (230 aa)) are pyrophosphorylase. Residues 9–12 (LAAG), Lys-23, Gln-73, and 78–79 (GT) contribute to the UDP-N-acetyl-alpha-D-glucosamine site. Residue Asp-103 participates in Mg(2+) binding. The UDP-N-acetyl-alpha-D-glucosamine site is built by Gly-140, Glu-155, Asn-170, and Asn-228. Mg(2+) is bound at residue Asn-228. Residues 231–251 (IALAEASKLMQRRINDNHMRN) are linker. The N-acetyltransferase stretch occupies residues 252–457 (GVTLVNPENT…DYAKRLNHGK (206 aa)). UDP-N-acetyl-alpha-D-glucosamine is bound by residues Arg-333 and Lys-351. The Proton acceptor role is filled by His-363. 2 residues coordinate UDP-N-acetyl-alpha-D-glucosamine: Tyr-366 and Asn-377. Residues 386-387 (NY), Ala-423, and Arg-440 each bind acetyl-CoA.

It in the N-terminal section; belongs to the N-acetylglucosamine-1-phosphate uridyltransferase family. This sequence in the C-terminal section; belongs to the transferase hexapeptide repeat family. Homotrimer. It depends on Mg(2+) as a cofactor.

Its subcellular location is the cytoplasm. The catalysed reaction is alpha-D-glucosamine 1-phosphate + acetyl-CoA = N-acetyl-alpha-D-glucosamine 1-phosphate + CoA + H(+). It catalyses the reaction N-acetyl-alpha-D-glucosamine 1-phosphate + UTP + H(+) = UDP-N-acetyl-alpha-D-glucosamine + diphosphate. Its pathway is nucleotide-sugar biosynthesis; UDP-N-acetyl-alpha-D-glucosamine biosynthesis; N-acetyl-alpha-D-glucosamine 1-phosphate from alpha-D-glucosamine 6-phosphate (route II): step 2/2. It participates in nucleotide-sugar biosynthesis; UDP-N-acetyl-alpha-D-glucosamine biosynthesis; UDP-N-acetyl-alpha-D-glucosamine from N-acetyl-alpha-D-glucosamine 1-phosphate: step 1/1. It functions in the pathway bacterial outer membrane biogenesis; LPS lipid A biosynthesis. Catalyzes the last two sequential reactions in the de novo biosynthetic pathway for UDP-N-acetylglucosamine (UDP-GlcNAc). The C-terminal domain catalyzes the transfer of acetyl group from acetyl coenzyme A to glucosamine-1-phosphate (GlcN-1-P) to produce N-acetylglucosamine-1-phosphate (GlcNAc-1-P), which is converted into UDP-GlcNAc by the transfer of uridine 5-monophosphate (from uridine 5-triphosphate), a reaction catalyzed by the N-terminal domain. The chain is Bifunctional protein GlmU from Listeria welshimeri serovar 6b (strain ATCC 35897 / DSM 20650 / CCUG 15529 / CIP 8149 / NCTC 11857 / SLCC 5334 / V8).